The primary structure comprises 133 residues: MIKGFRDFILKGNVVDLAVAVVIGAAFGTVVTTLVNNIIMPLIAGIVGKPSFNDVWAFQIGSDPANKLLLGAFITVLLNFVIIAAAIYFMVVVPMNHVIARRNAKLGIKAGEETPDPQIVLLTEIRDALKSRS.

Helical transmembrane passes span 14 to 34 and 73 to 93; these read VVDL…VTTL and FITV…MVVV.

The protein belongs to the MscL family. As to quaternary structure, homopentamer.

The protein resides in the cell membrane. In terms of biological role, channel that opens in response to stretch forces in the membrane lipid bilayer. May participate in the regulation of osmotic pressure changes within the cell. The polypeptide is Large-conductance mechanosensitive channel (Renibacterium salmoninarum (strain ATCC 33209 / DSM 20767 / JCM 11484 / NBRC 15589 / NCIMB 2235)).